We begin with the raw amino-acid sequence, 223 residues long: Ribonuclease T (223 aa).

Positions 20-195 (VVIDVETAGF…YDTERTAELF (176 aa)) constitute an Exonuclease domain. 4 residues coordinate Mg(2+): aspartate 23, glutamate 25, histidine 182, and aspartate 187. Histidine 182 serves as the catalytic Proton donor/acceptor.

The protein belongs to the RNase T family. Homodimer. Mg(2+) is required as a cofactor.

Functionally, trims short 3' overhangs of a variety of RNA species, leaving a one or two nucleotide 3' overhang. Responsible for the end-turnover of tRNA: specifically removes the terminal AMP residue from uncharged tRNA (tRNA-C-C-A). Also appears to be involved in tRNA biosynthesis. The polypeptide is Ribonuclease T (Photobacterium profundum (strain SS9)).